A 72-amino-acid polypeptide reads, in one-letter code: MSILISPSDNRGWGANMRYRRRASMRGVGRRRLTLRQLLGLGSRRRRRSRPTTVSNRLVVVSTRRRSSRRRR.

Serine 2 bears the N-acetylserine; by host mark. Positions 2–14 (SILISPSDNRGWG) are excised as a propeptide.

The protein belongs to the adenoviridae histone-like nucleoprotein family. Interacts with the core-capsid bridging protein; this interaction bridges the virus core to the capsid. In terms of processing, cleaved near the N-terminus by the viral protease during virion maturation to form the mature protein.

Its subcellular location is the host nucleus. The protein localises to the host nucleolus. It is found in the virion. Strongly bound to viral DNA and responsible for wrapping and condensing the viral DNA. Probably promotes viral genome import into the nucleus and is still associated with the viral DNA when the latter enters into the host nucleus. The sequence is that of Pre-histone-like nucleoprotein from Galliformes (FAdV-1).